The following is a 1480-amino-acid chain: ABC transporter G family member 49 (1480 aa).

The span at 1-18 shows a compositional bias: polar residues; it reads MHTTTQATPQKSMVMTTT. Disordered regions lie at residues 1 to 42, 60 to 81, and 104 to 124; these read MHTT…AGSS, VSGE…EDDE, and SSTR…GGAA. Composition is skewed to gly residues over residues 63 to 73 and 107 to 123; these read ELGGGGGGGGG and RGGG…GGGA. Residues 212–485 form the ABC transporter 1 domain; that stretch reads LAAKLGFSHH…FESCGFKCPE (274 aa). Residue 245–252 participates in ATP binding; that stretch reads GPPGCGKT. In terms of domain architecture, ABC transmembrane type-2 1 spans 563 to 775; it reads HLLKACFDRE…AEIGLTGNEF (213 aa). A run of 6 helical transmembrane segments spans residues 581-601, 619-639, 656-676, 699-719, 725-745, and 811-831; these read FLHI…GTVF, SLFY…VMSI, GWAY…VAAL, LLVL…VGSY, VGPI…GFLI, and VAAL…GLTI. An ABC transporter 2 domain is found at 877–1129; sequence ISFQDVNYYV…KVIQYFQSIP (253 aa). An ATP-binding site is contributed by 922 to 929; that stretch reads GVTGAGKT. Residues 1202-1418 enclose the ABC transmembrane type-2 2 domain; it reads EQFKACLWKQ…TLNLLFTTQF (217 aa). The next 7 helical transmembrane spans lie at 1226 to 1246, 1254 to 1274, 1311 to 1331, 1340 to 1360, 1368 to 1388, 1396 to 1416, and 1449 to 1469; these read IVFM…QGNI, GLFT…INNS, IPYV…TIGY, WFFY…MLIV, VASI…GFVM, WWIW…LFTT, and LLPL…ILYG.

This sequence belongs to the ABC transporter superfamily. ABCG family. PDR (TC 3.A.1.205) subfamily.

It localises to the membrane. May be a general defense protein. This chain is ABC transporter G family member 49, found in Oryza sativa subsp. japonica (Rice).